Consider the following 345-residue polypeptide: Isopentenyl-diphosphate delta-isomerase (345 aa).

14 to 15 (RK) serves as a coordination point for substrate. FMN contacts are provided by residues Ser-71, 72 to 74 (SMT), Ser-102, and Asn-130. Substrate is bound at residue 102-104 (SMR). Residue Gln-165 participates in substrate binding. Mg(2+) is bound at residue Glu-166. FMN contacts are provided by residues Lys-197, Thr-227, 277–279 (GLK), and 298–299 (AG).

Belongs to the IPP isomerase type 2 family. In terms of assembly, homooctamer. Dimer of tetramers. FMN is required as a cofactor. Requires NADPH as cofactor. Mg(2+) serves as cofactor.

The protein resides in the cytoplasm. It carries out the reaction isopentenyl diphosphate = dimethylallyl diphosphate. Involved in the biosynthesis of isoprenoids. Catalyzes the 1,3-allylic rearrangement of the homoallylic substrate isopentenyl (IPP) to its allylic isomer, dimethylallyl diphosphate (DMAPP). The sequence is that of Isopentenyl-diphosphate delta-isomerase from Rickettsia felis (strain ATCC VR-1525 / URRWXCal2) (Rickettsia azadi).